A 217-amino-acid chain; its full sequence is Ribosomal RNA small subunit methyltransferase G (217 aa).

S-adenosyl-L-methionine contacts are provided by residues glycine 79, leucine 84, 130–131 (IE), and arginine 145.

Belongs to the methyltransferase superfamily. RNA methyltransferase RsmG family.

The protein resides in the cytoplasm. It catalyses the reaction guanosine(527) in 16S rRNA + S-adenosyl-L-methionine = N(7)-methylguanosine(527) in 16S rRNA + S-adenosyl-L-homocysteine. In terms of biological role, specifically methylates the N7 position of guanine in position 527 of 16S rRNA. In Hahella chejuensis (strain KCTC 2396), this protein is Ribosomal RNA small subunit methyltransferase G.